Consider the following 581-residue polypeptide: 2-succinyl-5-enolpyruvyl-6-hydroxy-3-cyclohexene-1-carboxylate synthase (581 aa).

It belongs to the TPP enzyme family. MenD subfamily. As to quaternary structure, homodimer. The cofactor is Mg(2+). Requires Mn(2+) as cofactor. It depends on thiamine diphosphate as a cofactor.

The catalysed reaction is isochorismate + 2-oxoglutarate + H(+) = 5-enolpyruvoyl-6-hydroxy-2-succinyl-cyclohex-3-ene-1-carboxylate + CO2. It functions in the pathway quinol/quinone metabolism; 1,4-dihydroxy-2-naphthoate biosynthesis; 1,4-dihydroxy-2-naphthoate from chorismate: step 2/7. Its pathway is quinol/quinone metabolism; menaquinone biosynthesis. In terms of biological role, catalyzes the thiamine diphosphate-dependent decarboxylation of 2-oxoglutarate and the subsequent addition of the resulting succinic semialdehyde-thiamine pyrophosphate anion to isochorismate to yield 2-succinyl-5-enolpyruvyl-6-hydroxy-3-cyclohexene-1-carboxylate (SEPHCHC). This chain is 2-succinyl-5-enolpyruvyl-6-hydroxy-3-cyclohexene-1-carboxylate synthase, found in Psychromonas ingrahamii (strain DSM 17664 / CCUG 51855 / 37).